The chain runs to 726 residues: Catalase-peroxidase (726 aa).

The tract at residues Met-1–Thr-33 is disordered. The tryptophyl-tyrosyl-methioninium (Trp-Tyr) (with M-252) cross-link spans Trp-105 to Tyr-226. His-106 (proton acceptor) is an active-site residue. Positions Tyr-226–Met-252 form a cross-link, tryptophyl-tyrosyl-methioninium (Tyr-Met) (with W-105). His-267 is a binding site for heme b.

The protein belongs to the peroxidase family. Peroxidase/catalase subfamily. Homodimer or homotetramer. Requires heme b as cofactor. Post-translationally, formation of the three residue Trp-Tyr-Met cross-link is important for the catalase, but not the peroxidase activity of the enzyme.

It carries out the reaction H2O2 + AH2 = A + 2 H2O. It catalyses the reaction 2 H2O2 = O2 + 2 H2O. Functionally, bifunctional enzyme with both catalase and broad-spectrum peroxidase activity. This Shigella boydii serotype 4 (strain Sb227) protein is Catalase-peroxidase.